A 197-amino-acid polypeptide reads, in one-letter code: Dephospho-CoA kinase (197 aa).

Residues 2 to 197 enclose the DPCK domain; it reads IIGITGGIAS…SALLSLANPR (196 aa). 10–15 contributes to the ATP binding site; it reads ASGKST.

This sequence belongs to the CoaE family.

Its subcellular location is the cytoplasm. It catalyses the reaction 3'-dephospho-CoA + ATP = ADP + CoA + H(+). The protein operates within cofactor biosynthesis; coenzyme A biosynthesis; CoA from (R)-pantothenate: step 5/5. Catalyzes the phosphorylation of the 3'-hydroxyl group of dephosphocoenzyme A to form coenzyme A. The chain is Dephospho-CoA kinase from Streptococcus pyogenes serotype M3 (strain ATCC BAA-595 / MGAS315).